We begin with the raw amino-acid sequence, 174 residues long: Matrix protein (174 aa).

Homomultimer. Interacts with nucleoprotein and with the cytoplasmic domain of glycoprotein.

The protein localises to the virion membrane. It is found in the host endomembrane system. In terms of biological role, plays a major role in assembly and budding of virion. Completely covers the ribonucleoprotein coil and keep it in condensed bullet-shaped form. Inhibits viral transcription and stimulates replication. The polypeptide is Matrix protein (M) (Hordeum vulgare (Barley)).